The chain runs to 166 residues: MNIRQQLTQFLSLAYVFTSAFVIWKSLGIITNSHSPIVVVLSGSMEPAFQRGDILFLWNRDQEAKVGDIVVYEIQGRNIPIVHRVLREHHNSDKQLLLTKGDNNAVDDLGLYAKKQKYLNQKTDLVGSVKAYLPKLGYVTILITENVYFKYGMLGLMCISTLLTNE.

Residues 1-9 (MNIRQQLTQ) lie on the Cytoplasmic side of the membrane. A helical; Signal-anchor for type II membrane protein transmembrane segment spans residues 10–30 (FLSLAYVFTSAFVIWKSLGII). Residues 31–166 (TNSHSPIVVV…MCISTLLTNE (136 aa)) lie on the Lumenal side of the membrane. Active-site charge relay system residues include Ser-44, His-83, and Asp-108. A C-terminal short (CTS) helix region spans residues 152 to 163 (GMLGLMCISTLL).

Belongs to the peptidase S26B family. In terms of assembly, component of the signal peptidase complex (SPC) composed of a catalytic subunit SEC11 and three accessory subunits SPC1, SPC2 and SPC3. The complex induces a local thinning of the ER membrane which is used to measure the length of the signal peptide (SP) h-region of protein substrates. This ensures the selectivity of the complex towards h-regions shorter than 18-20 amino acids. SPC associates with the translocon complex.

It localises to the endoplasmic reticulum membrane. It catalyses the reaction Cleavage of hydrophobic, N-terminal signal or leader sequences from secreted and periplasmic proteins.. Catalytic component of the signal peptidase complex (SPC) which catalyzes the cleavage of N-terminal signal sequences from nascent proteins as they are translocated into the lumen of the endoplasmic reticulum. Specifically cleaves N-terminal signal peptides that contain a hydrophobic alpha-helix (h-region) shorter than 18-20 amino acids. The chain is Signal peptidase complex catalytic subunit SEC11 (SEC11) from Scheffersomyces stipitis (strain ATCC 58785 / CBS 6054 / NBRC 10063 / NRRL Y-11545) (Yeast).